The following is a 243-amino-acid chain: uncharacterized protein (243 aa).

Positions 1-16 (MKHFIILFLLLFVTAG) are cleaved as a signal peptide. Cysteine 17 carries the N-palmitoyl cysteine lipid modification. A lipid anchor (S-diacylglycerol cysteine) is attached at cysteine 17.

Its subcellular location is the cell membrane. This is an uncharacterized protein from Bacillus subtilis (strain 168).